A 489-amino-acid polypeptide reads, in one-letter code: Glutamate--tRNA ligase (489 aa).

The 'HIGH' region signature appears at 12–22; that stretch reads PSPTGIPHVGM. Positions 256–260 match the 'KMSKS' region motif; that stretch reads KLSKR. K259 contacts ATP.

Belongs to the class-I aminoacyl-tRNA synthetase family. Glutamate--tRNA ligase type 1 subfamily. In terms of assembly, monomer.

It is found in the cytoplasm. It catalyses the reaction tRNA(Glu) + L-glutamate + ATP = L-glutamyl-tRNA(Glu) + AMP + diphosphate. Its function is as follows. Catalyzes the attachment of glutamate to tRNA(Glu) in a two-step reaction: glutamate is first activated by ATP to form Glu-AMP and then transferred to the acceptor end of tRNA(Glu). In Mycobacterium marinum (strain ATCC BAA-535 / M), this protein is Glutamate--tRNA ligase.